The sequence spans 122 residues: Large ribosomal subunit protein uL14c (122 aa).

It belongs to the universal ribosomal protein uL14 family. In terms of assembly, part of the 50S ribosomal subunit.

Its subcellular location is the plastid. The protein resides in the chloroplast. Binds to 23S rRNA. The chain is Large ribosomal subunit protein uL14c from Adiantum capillus-veneris (Maidenhair fern).